The primary structure comprises 283 residues: Pseudokinase OPG198 (283 aa).

Residues Met-1 and Lys-30 each contribute to the ATP site. In terms of domain architecture, Protein kinase spans 1-283 (MESFKYCFDN…DRLRRLFIQD (283 aa)).

The protein belongs to the protein kinase superfamily. Ser/Thr protein kinase family. Poxviruses subfamily. As to quaternary structure, interacts with B1/VPK1. Interacts with host VRK1. Interacts with host VRK2.

The protein resides in the host nucleus. Both catalytically active kinases B1/VPK1 and host VRK2 repress B12 inhibitory activity in a B1/VPK1 deletion mutant strain. Functionally, pseudokinase that plays a role in viral DNA replication repression by activating the antiviral protein BANF1 and inhibiting the activity of host VRK1, a cellular modulator of BANF1. The polypeptide is Pseudokinase OPG198 (OPG198) (Vaccinia virus (strain Ankara) (VACV)).